The chain runs to 311 residues: Putative prophage capsid protein YqbE (311 aa).

This sequence belongs to the encapsulin family. Family 3 subfamily.

Possibly a prophage capsid protein. The chain is Putative prophage capsid protein YqbE (yqbE) from Bacillus subtilis (strain 168).